We begin with the raw amino-acid sequence, 125 residues long: UPF0102 protein ABO_0585 (125 aa).

The protein belongs to the UPF0102 family.

The polypeptide is UPF0102 protein ABO_0585 (Alcanivorax borkumensis (strain ATCC 700651 / DSM 11573 / NCIMB 13689 / SK2)).